Consider the following 1161-residue polypeptide: Translation initiation factor IF-2 (1161 aa).

A disordered region spans residues Lys-67–Lys-561. The segment covering Gln-83–Asn-105 has biased composition (basic and acidic residues). Residues Ser-139–Asn-154 show a composition bias toward polar residues. 2 stretches are compositionally biased toward basic and acidic residues: residues Asn-164–Ser-180 and Lys-211–Asp-220. 2 stretches are compositionally biased toward low complexity: residues Asn-224–Lys-250 and Asn-268–Asn-282. 3 stretches are compositionally biased toward polar residues: residues Arg-295–Ser-311, Arg-352–Pro-362, and Leu-380–Ser-393. A compositionally biased stretch (basic and acidic residues) spans Ala-412–Lys-432. The segment covering Ser-440–Lys-461 has biased composition (polar residues). Composition is skewed to basic and acidic residues over residues Gly-464 to Arg-478 and Lys-543 to Lys-561. In terms of domain architecture, tr-type G spans Lys-653–Glu-830. The interval Gly-662–Thr-669 is G1. Gly-662–Thr-669 lines the GTP pocket. Positions Gly-687–His-691 are G2. Positions Asp-712 to Gly-715 are G3. Residues Asp-712–His-716 and Asn-766–Asp-769 contribute to the GTP site. The interval Asn-766 to Asp-769 is G4. A G5 region spans residues Ser-802–Ile-804.

It belongs to the TRAFAC class translation factor GTPase superfamily. Classic translation factor GTPase family. IF-2 subfamily.

Its subcellular location is the cytoplasm. Functionally, one of the essential components for the initiation of protein synthesis. Protects formylmethionyl-tRNA from spontaneous hydrolysis and promotes its binding to the 30S ribosomal subunits. Also involved in the hydrolysis of GTP during the formation of the 70S ribosomal complex. In Prochlorococcus marinus (strain MIT 9515), this protein is Translation initiation factor IF-2.